The chain runs to 225 residues: Ribonuclease 3 (225 aa).

In terms of domain architecture, RNase III spans 7–129 (IPRLCRTLGY…IIGAIYLDSD (123 aa)). Glu42 serves as a coordination point for Mg(2+). Residue Asp46 is part of the active site. Asp115 and Glu118 together coordinate Mg(2+). The active site involves Glu118. Residues 155–225 (DPKTLLQEHL…AAQVLELIKK (71 aa)) enclose the DRBM domain.

The protein belongs to the ribonuclease III family. In terms of assembly, homodimer. The cofactor is Mg(2+).

It localises to the cytoplasm. It catalyses the reaction Endonucleolytic cleavage to 5'-phosphomonoester.. Functionally, digests double-stranded RNA. Involved in the processing of primary rRNA transcript to yield the immediate precursors to the large and small rRNAs (23S and 16S). Processes some mRNAs, and tRNAs when they are encoded in the rRNA operon. Processes pre-crRNA and tracrRNA of type II CRISPR loci if present in the organism. This Shewanella piezotolerans (strain WP3 / JCM 13877) protein is Ribonuclease 3.